The sequence spans 523 residues: Nondiscriminating glutamyl-tRNA synthetase EARS2, mitochondrial (523 aa).

A mitochondrion-targeting transit peptide spans 1 to 41 (MAALLRRLLQRERPSAASGRPVGRREANLGTDAGVAVRVRF). 40 to 42 (RFA) provides a ligand contact to L-glutamate. Positions 45 to 53 (PTGFLHLGG) match the 'HIGH' region motif. His50 contributes to the ATP binding site. Residues Glu76, 228–232 (YHLAC), and Arg246 each bind L-glutamate. Glu249 provides a ligand contact to ATP. At Lys256 the chain carries N6-succinyllysine. Position 284-288 (284-288 (KLSKR)) interacts with ATP. Positions 284–288 (KLSKR) match the 'KMSKS' region motif. Lys486 bears the N6-acetyllysine mark.

The protein belongs to the class-I aminoacyl-tRNA synthetase family. Glutamate--tRNA ligase type 1 subfamily.

Its subcellular location is the mitochondrion matrix. It carries out the reaction tRNA(Glx) + L-glutamate + ATP = L-glutamyl-tRNA(Glx) + AMP + diphosphate. The enzyme catalyses tRNA(Glu) + L-glutamate + ATP = L-glutamyl-tRNA(Glu) + AMP + diphosphate. It catalyses the reaction tRNA(Gln) + L-glutamate + ATP = L-glutamyl-tRNA(Gln) + AMP + diphosphate. Its function is as follows. Non-discriminating glutamyl-tRNA synthetase that catalyzes aminoacylation of both mitochondrial tRNA(Glu) and tRNA(Gln) and participates in RNA aminoacylation for mitochondrial protein translation. Attachs glutamate to tRNA(Glu) or tRNA(Gln) in a two-step reaction: glutamate is first activated by ATP to form Glu-AMP and then transferred to the acceptor end of tRNA(Glu) or tRNA(Gln). In vitro, cytoplasmic tRNA(Gln) is slightly glutamylated, but with low activity. The sequence is that of Nondiscriminating glutamyl-tRNA synthetase EARS2, mitochondrial from Homo sapiens (Human).